The following is a 363-amino-acid chain: Caffeic acid 3-O-methyltransferase (363 aa).

Residue M130 to L136 coordinates substrate. Residues A162–M180 form a substrate binding region. Residues G208, D231, D251, M252, and K265 each coordinate S-adenosyl-L-methionine. H269 functions as the Proton acceptor in the catalytic mechanism.

It belongs to the class I-like SAM-binding methyltransferase superfamily. Cation-independent O-methyltransferase family. COMT subfamily. In terms of assembly, homodimer.

The catalysed reaction is (E)-caffeate + S-adenosyl-L-methionine = (E)-ferulate + S-adenosyl-L-homocysteine + H(+). It participates in aromatic compound metabolism; phenylpropanoid biosynthesis. Its function is as follows. Catalyzes the conversion of caffeic acid to ferulic acid and of 5-hydroxyferulic acid to sinapic acid. The resulting products may subsequently be converted to the corresponding alcohols that are incorporated into lignins. The sequence is that of Caffeic acid 3-O-methyltransferase (COMT1) from Catharanthus roseus (Madagascar periwinkle).